A 366-amino-acid polypeptide reads, in one-letter code: Isocitrate dehydrogenase [NAD] subunit alpha, mitochondrial (366 aa).

Residues 1–27 (MAGSAWVSKVSRLLGAFHNTKQVTRGF) constitute a mitochondrion transit peptide. Residue Lys77 is modified to N6-succinyllysine. Thr101 is modified (phosphothreonine). Substrate-binding residues include Arg115, Arg125, and Arg146. Lys223 is modified (N6-acetyllysine). The Mg(2+) site is built by Asp233, Asp257, and Asp261. N6-acetyllysine; alternate is present on Lys343. Lys343 carries the post-translational modification N6-succinyllysine; alternate. Lys350 bears the N6-succinyllysine mark.

Belongs to the isocitrate and isopropylmalate dehydrogenases family. As to quaternary structure, heterooligomer of subunits alpha (IDH3A), beta (IDH3B), and gamma (IDH3G) in the apparent ratio of 2:1:1. The heterodimer containing one IDH3A and one IDH3B subunit and the heterodimer containing one IDH3A and one IDH3G subunit assemble into a heterotetramer (which contains two subunits of IDH3A, one of IDH3B and one of IDH3G) and further into the heterooctamer. Requires Mg(2+) as cofactor. Mn(2+) is required as a cofactor. Expressed in brown adipose tissue (BAT).

The protein localises to the mitochondrion. The enzyme catalyses D-threo-isocitrate + NAD(+) = 2-oxoglutarate + CO2 + NADH. Its activity is regulated as follows. The heterotetramer and the heterodimer composed of IDH3A and IDH3G subunits can be allosterically activated by citrate (CIT) or/and ADP, and the two activators can act independently or synergistically. The heterodimer composed of IDH3A and IDH3B subunits cannot be allosterically regulated and the allosteric regulation of the heterotetramer is through the IDH3G subunit and not the IDH3B subunit. The IDH3G subunit contains the allosteric site which consists of a CIT-binding site and an ADP-binding site, and the binding of CIT and ADP causes conformational changes at the allosteric site which are transmitted to the active site in the catalytic subunit (IDH3A) through a cascade of conformational changes at the heterodimer interface, leading to stabilization of the isocitrate-binding at the active site and thus activation of the enzyme. ATP can activate the heterotetramer and the heterodimer composed of IDH3A and IDH3G subunits at low concentrations but inhibits their activities at high concentrations, whereas ATP exhibits only inhibitory effect on the heterodimer composed of IDH3A and IDH3B subunits. Functionally, catalytic subunit of the enzyme which catalyzes the decarboxylation of isocitrate (ICT) into alpha-ketoglutarate. The heterodimer composed of the alpha (IDH3A) and beta (IDH3B) subunits and the heterodimer composed of the alpha (IDH3A) and gamma (IDH3G) subunits, have considerable basal activity but the full activity of the heterotetramer (containing two subunits of IDH3A, one of IDH3B and one of IDH3G) requires the assembly and cooperative function of both heterodimers. This is Isocitrate dehydrogenase [NAD] subunit alpha, mitochondrial from Rattus norvegicus (Rat).